A 269-amino-acid polypeptide reads, in one-letter code: MNNRYYQLNKNLIPYKLGCYIPFVVLGDPSIEISLEIIYSLIKNGADGLELGIPFSDPLADGPIIQQANLRAFSANITLTKCFEMLFKIRTHNPKIPIGILIYANLIFKLGIQKFYSICSKIDIDSVLIADVPIEESFEFEQHSIKNNIDSIFVCPPDASKNFLKKLSKHSTGYIYLLSRSGVTGIDMKITPPLKNFVKELKKLTSIPIIQGFGISNENQIKNIILSGVSGVICGSVIIQIIANNLNNKKIMLKKIKKLSNRFKKATII.

Active-site proton acceptor residues include E50 and D61.

It belongs to the TrpA family. As to quaternary structure, tetramer of two alpha and two beta chains.

It catalyses the reaction (1S,2R)-1-C-(indol-3-yl)glycerol 3-phosphate + L-serine = D-glyceraldehyde 3-phosphate + L-tryptophan + H2O. Its pathway is amino-acid biosynthesis; L-tryptophan biosynthesis; L-tryptophan from chorismate: step 5/5. Its function is as follows. The alpha subunit is responsible for the aldol cleavage of indoleglycerol phosphate to indole and glyceraldehyde 3-phosphate. The sequence is that of Tryptophan synthase alpha chain from Buchnera aphidicola subsp. Baizongia pistaciae (strain Bp).